Here is a 311-residue protein sequence, read N- to C-terminus: Phospho-N-acetylmuramoyl-pentapeptide-transferase (311 aa).

10 helical membrane passes run 2-22 (ENNVIVFFLSFLSSVVFIEGF), 48-68 (GTPTAAGLVFIPIFIAVLLNF), 74-94 (SFLIAFSALSYGLIGAIDDFM), 104-124 (ITAVQKLFMQFTAAFIIVYFI), 144-164 (LGWFYYLLSSVVIVGVSNAVN), 168-188 (GVDGLAGFVFIGSIVPLLIVG), 192-212 (VVYLSLIGLLMGFLWHNWHPA), 214-234 (IFMGDAGSLALGGILATSFAL), 237-257 (LELFLIFFGFIFLLETLSVII), and 288-308 (KIAFRFSTLALLVSLLGIIGW).

This sequence belongs to the glycosyltransferase 4 family. MraY subfamily. The cofactor is Mg(2+).

The protein resides in the cell inner membrane. The catalysed reaction is UDP-N-acetyl-alpha-D-muramoyl-L-alanyl-gamma-D-glutamyl-meso-2,6-diaminopimeloyl-D-alanyl-D-alanine + di-trans,octa-cis-undecaprenyl phosphate = di-trans,octa-cis-undecaprenyl diphospho-N-acetyl-alpha-D-muramoyl-L-alanyl-D-glutamyl-meso-2,6-diaminopimeloyl-D-alanyl-D-alanine + UMP. The protein operates within cell wall biogenesis; peptidoglycan biosynthesis. Catalyzes the initial step of the lipid cycle reactions in the biosynthesis of the cell wall peptidoglycan: transfers peptidoglycan precursor phospho-MurNAc-pentapeptide from UDP-MurNAc-pentapeptide onto the lipid carrier undecaprenyl phosphate, yielding undecaprenyl-pyrophosphoryl-MurNAc-pentapeptide, known as lipid I. This Kosmotoga olearia (strain ATCC BAA-1733 / DSM 21960 / TBF 19.5.1) protein is Phospho-N-acetylmuramoyl-pentapeptide-transferase.